The chain runs to 483 residues: GTPase Der (483 aa).

2 EngA-type G domains span residues 3–167 and 212–387; these read FTLA…GEER and LRIA…EIWN. Residues 9–16, 56–60, 119–122, 218–225, 265–269, and 330–333 each bind GTP; these read GRPNVGKS, DTAGL, NKAE, GRPNAGKS, DTAGM, and NKWD. The KH-like domain maps to 388–472; the sequence is RRISTGRLNR…PIRLSLRTSD (85 aa).

It belongs to the TRAFAC class TrmE-Era-EngA-EngB-Septin-like GTPase superfamily. EngA (Der) GTPase family. As to quaternary structure, associates with the 50S ribosomal subunit.

Functionally, GTPase that plays an essential role in the late steps of ribosome biogenesis. This chain is GTPase Der, found in Brucella melitensis biotype 2 (strain ATCC 23457).